Here is a 157-residue protein sequence, read N- to C-terminus: MRIGHGYDVHRFAEGDFVTLGGVRIPHRFGLLAHSDGDVLLHALCDALLGAAALGDIGRHFPDTDPRFKGVDSRVLLRHVVALVREKGWRVGNVDATIVAQAPKMAPHIERMRLSIAEDLQVGVEQVNVKATTTEKLGFTGREEGIAVHAVALLLAL.

2 residues coordinate a divalent metal cation: Asp8 and His10. Residues 8–10 (DVH) and 34–35 (HS) contribute to the 4-CDP-2-C-methyl-D-erythritol 2-phosphate site. A divalent metal cation is bound at residue His42. 4-CDP-2-C-methyl-D-erythritol 2-phosphate contacts are provided by residues 56-58 (DIG), 61-65 (FPDTD), 100-106 (AQAPKMA), 132-135 (TTTE), Phe139, and Arg142.

Belongs to the IspF family. As to quaternary structure, homotrimer. Requires a divalent metal cation as cofactor.

It carries out the reaction 4-CDP-2-C-methyl-D-erythritol 2-phosphate = 2-C-methyl-D-erythritol 2,4-cyclic diphosphate + CMP. It functions in the pathway isoprenoid biosynthesis; isopentenyl diphosphate biosynthesis via DXP pathway; isopentenyl diphosphate from 1-deoxy-D-xylulose 5-phosphate: step 4/6. Functionally, involved in the biosynthesis of isopentenyl diphosphate (IPP) and dimethylallyl diphosphate (DMAPP), two major building blocks of isoprenoid compounds. Catalyzes the conversion of 4-diphosphocytidyl-2-C-methyl-D-erythritol 2-phosphate (CDP-ME2P) to 2-C-methyl-D-erythritol 2,4-cyclodiphosphate (ME-CPP) with a corresponding release of cytidine 5-monophosphate (CMP). This chain is 2-C-methyl-D-erythritol 2,4-cyclodiphosphate synthase, found in Azotobacter vinelandii (strain DJ / ATCC BAA-1303).